Reading from the N-terminus, the 366-residue chain is Galactoside alpha-(1,2)-fucosyltransferase 1 (366 aa).

Residues 1 to 8 (MWPLSHRH) are Cytoplasmic-facing. Residues 9–25 (LCLAFLLVCVLSAISFF) traverse the membrane as a helical; Signal-anchor for type II membrane protein segment. Residues 26–366 (LHVHQDSFRH…LSPLWTLAEP (341 aa)) are Lumenal-facing. Asparagine 66, asparagine 302, and asparagine 328 each carry an N-linked (GlcNAc...) asparagine glycan.

It belongs to the glycosyltransferase 11 family.

The protein localises to the golgi apparatus. Its subcellular location is the golgi stack membrane. The catalysed reaction is a beta-D-galactosyl-(1-&gt;4)-N-acetyl-beta-D-glucosaminyl derivative + GDP-beta-L-fucose = an alpha-L-Fuc-(1-&gt;2)-beta-D-Gal-(1-&gt;4)-beta-D-GlcNAc derivative + GDP + H(+). It catalyses the reaction a ganglioside GA1 + GDP-beta-L-fucose = a ganglioside Fuc-GA1 + GDP + H(+). It carries out the reaction a beta-D-Gal-(1-&gt;3)-beta-D-GlcNAc-(1-&gt;3)-beta-D-Gal-(1-&gt;4)-beta-D-Glc-(1&lt;-&gt;1')-Cer(d18:1(4E)) + GDP-beta-L-fucose = alpha-L-fucosyl-(1-&gt;2)- beta-D-galactosyl-(1-&gt;3)-N-acetyl-beta-D-glucosaminyl-(1-&gt;3)-beta-D-galactosyl-(1-&gt;4)-beta-D-glucosyl-(1&lt;-&gt;1')-N-acylsphing-4-enine + GDP + H(+). The enzyme catalyses a neolactoside nLc4Cer(d18:1(4E)) + GDP-beta-L-fucose = a neolactoside IV(2)-alpha-Fuc-nLc4Cer(d18:1(4E)) + GDP + H(+). The catalysed reaction is a ganglioside GM1 + GDP-beta-L-fucose = a ganglioside Fuc-GM1 + GDP + H(+). It catalyses the reaction beta-D-galactosyl-(1-&gt;3)-N-acetyl-D-galactosamine + GDP-beta-L-fucose = alpha-L-fucosyl-(1-&gt;2)-beta-D-galactosyl-(1-&gt;3)-N-acetyl-D-galactosamine + GDP + H(+). It functions in the pathway protein modification; protein glycosylation. In terms of biological role, catalyzes the transfer of L-fucose, from a guanosine diphosphate-beta-L-fucose, to the terminal galactose residue of glycoconjugates through an alpha(1,2) linkage leading to H antigen synthesis that is an intermediate substrate in the synthesis of ABO blood group antigens. H antigen is essential for maturation of the glomerular layer of the main olfactory bulb, in cell migration and early cell-cell contacts during tumor associated angiogenesis. Preferentially fucosylates soluble lactose and to a lesser extent fucosylates glycolipids gangliosides GA1 and GM1a. The protein is Galactoside alpha-(1,2)-fucosyltransferase 1 of Alouatta caraya (Black howler monkey).